The chain runs to 683 residues: Amphiphysin (683 aa).

Coiled coils occupy residues 10–83 (AKNV…SLHE) and 144–191 (DYDS…QEEL). A BAR domain is found at 24–240 (VLQKLGKADE…MTKLGDQHAD (217 aa)). 3 disordered regions span residues 244 to 311 (SIQG…KVTP), 421 to 443 (AETEQALPTEPQAEEPPTTAAAP), and 455 to 599 (EPKE…ASLS). The residue at position 252 (serine 252) is a Phosphoserine. The residue at position 260 (threonine 260) is a Phosphothreonine. Over residues 261 to 274 (PSPPEEASPLPSPT) the composition is skewed to pro residues. 4 positions are modified to phosphoserine: serine 262, serine 268, serine 272, and serine 276. Threonine 280 carries the phosphothreonine modification. Composition is skewed to low complexity over residues 424-443 (EQALPTEPQAEEPPTTAAAP) and 468-477 (AGETVGTEGS). Serine 496 bears the Phosphoserine mark. The segment covering 539 to 559 (SNHEGEEHQETTTGTETREAT) has biased composition (basic and acidic residues). Positions 585–596 (AATPAPAGAVDA) are enriched in low complexity. Positions 610-683 (GFLYKVETLH…FPENFTRHLE (74 aa)) constitute an SH3 domain. The residue at position 626 (serine 626) is a Phosphoserine.

In terms of assembly, heterodimer with BIN1. Binds SH3GLB1. Interacts with REPS1 and SGIP1. Binds AP2A2. Interacts with AP2B1. Interacts with DNM1 and SYNJ1.

Its subcellular location is the cytoplasmic vesicle. The protein resides in the secretory vesicle. It localises to the synaptic vesicle membrane. It is found in the cytoplasm. The protein localises to the cytoskeleton. Its function is as follows. May participate in mechanisms of regulated exocytosis in synapses and certain endocrine cell types. May control the properties of the membrane associated cytoskeleton. The polypeptide is Amphiphysin (Amph) (Rattus norvegicus (Rat)).